The chain runs to 1452 residues: ABC multidrug transporter A (1452 aa).

Residues 1 to 20 form a disordered region; that stretch reads MNESHEAGKNSSTNVEEREE. N-linked (GlcNAc...) asparagine glycans are attached at residues N2, N10, N228, N287, and N311. One can recognise an ABC transporter 1 domain in the interval 110–363; that stretch reads LKTLSLARIA…FLQMGFVCPD (254 aa). 6 helical membrane-spanning segments follow: residues 474 to 494, 508 to 528, 554 to 574, 583 to 603, 616 to 636, and 725 to 745; these read VTISSLFGNTIISLVIASIFY, ALLFFAVLMNALGCGLEMLTL, MIMDLPYKILNAITSNIVLYF, GAFFFFVFTSFILTLTMSMFF, VLPFSAVLLLGLSMYTGFAIP, and IGVIFAYMFLLGAVYLVATDF. The ABC transporter 2 domain maps to 802 to 1044; the sequence is FQWKDVCFDI…ILIDYFVRNG (243 aa). 838–845 is an ATP binding site; sequence GVSGAGKT. The next 5 helical transmembrane spans lie at 1153 to 1173, 1183 to 1203, 1223 to 1243, 1271 to 1291, and 1297 to 1317; these read ALCVLSALFVGFSLFHTPNTI, IFMLLTLFGQLIQQIMPHFVA, FLIANIVVELPWNSLMSVLMF, LMIWTFLLFSSTFAHFMIAAF, and AGNLGNLLFLLCLLFCGVLAT. Residues N1350, N1365, and N1391 are each glycosylated (N-linked (GlcNAc...) asparagine). The chain crosses the membrane as a helical span at residues 1418 to 1438; the sequence is FGLMWVFIVFNIFAACSLYWW.

This sequence belongs to the ABC transporter superfamily. ABCG family. PDR (TC 3.A.1.205) subfamily.

It is found in the membrane. In terms of biological role, ABC transporter that seems not to be involved in the efflux of toxic substances, at least not the classical compounds such as itraconazole, amphotericin B, voriconazole, posaconazole, ravuconazole, or echinocandins. The sequence is that of ABC multidrug transporter A from Aspergillus fumigatus (Neosartorya fumigata).